The sequence spans 151 residues: MATLESRLVDMLTVPVEALGFQLWGIEYVQAGKHSILRVFIDGENGINIEDCANVSRQVSAVLDVEDPISTEYTLEVSSPGVDRPLFTAEQYAAYVGEDVKLQLTMPVAGSRNLKGAITQVDGQMLSLNVNGKELVVALDNIRKGNIIAKF.

This sequence belongs to the RimP family.

It is found in the cytoplasm. Its function is as follows. Required for maturation of 30S ribosomal subunits. This Shewanella sp. (strain MR-4) protein is Ribosome maturation factor RimP.